We begin with the raw amino-acid sequence, 234 residues long: Transcriptional regulatory protein CitB (234 aa).

The Response regulatory domain occupies 5-121 (TTLIVEDEPM…RLQHTLERFA (117 aa)). Asp56 bears the 4-aspartylphosphate mark. Residues 181–200 (ADSLARILGSSKTTARRYLE) constitute a DNA-binding region (H-T-H motif).

In vitro CitB and the CitA kinase domain form a complex, formation of which is enhanced by ATP. Post-translationally, phosphorylated by CitA.

The protein localises to the cytoplasm. In terms of biological role, member of the two-component regulatory system CitA/CitB essential for expression of citrate-specific fermentation genes. Phosphorylated CitB binds to two sites in the citS-citC intergenic region where it probably activates transcription of both genes. In Klebsiella pneumoniae, this protein is Transcriptional regulatory protein CitB (citB).